The following is a 632-amino-acid chain: tRNA uridine 5-carboxymethylaminomethyl modification enzyme MnmG (632 aa).

Residues 15–20, isoleucine 127, and serine 182 contribute to the FAD site; that span reads GAGHAG. 276 to 290 is an NAD(+) binding site; that stretch reads GPRYCPSIEDKIVRF. Glutamine 373 provides a ligand contact to FAD.

Belongs to the MnmG family. Homodimer. Heterotetramer of two MnmE and two MnmG subunits. Requires FAD as cofactor.

The protein localises to the cytoplasm. Its function is as follows. NAD-binding protein involved in the addition of a carboxymethylaminomethyl (cmnm) group at the wobble position (U34) of certain tRNAs, forming tRNA-cmnm(5)s(2)U34. This Streptococcus pyogenes serotype M4 (strain MGAS10750) protein is tRNA uridine 5-carboxymethylaminomethyl modification enzyme MnmG.